Consider the following 123-residue polypeptide: Glycine cleavage system H protein (123 aa).

Residues 22 to 104 (VATVGITSYA…FGAGWLVKVR (83 aa)) enclose the Lipoyl-binding domain. Lysine 63 bears the N6-lipoyllysine mark.

Belongs to the GcvH family. As to quaternary structure, the glycine cleavage system is composed of four proteins: P, T, L and H. Requires (R)-lipoate as cofactor.

Its function is as follows. The glycine cleavage system catalyzes the degradation of glycine. The H protein shuttles the methylamine group of glycine from the P protein to the T protein. The sequence is that of Glycine cleavage system H protein from Clavibacter sepedonicus (Clavibacter michiganensis subsp. sepedonicus).